Consider the following 452-residue polypeptide: Na(+)/H(+) antiporter NhaA (452 aa).

A run of 11 helical transmembrane segments spans residues 23–43 (MMLFLASVLAVIMANSSLSTI), 71–91 (LLQFVNDVLMVIFFLAVGLEI), 108–128 (LPIVGAIGGMIVPVLFFLLVV), 136–156 (GAAIPMSTDIAFALAALAVLG), 165–185 (VFLTALAVADDIGGIIVIALF), 189–209 (HINIGMLAIAFGILFIMYLMG), 216–236 (LGLYFVCTFFVWLFFLQSGIH), 316–336 (IVGYFVLPLFAFANAGITLGG), 349–369 (VFLGLFVGKPLGIYFFTYGFV), 385–405 (LMAVSLFGGIGFTVSLFIATL), and 418–438 (EAKLGIFVASIFAALVGIVTL).

It belongs to the NhaA Na(+)/H(+) (TC 2.A.33) antiporter family.

It localises to the cell inner membrane. It carries out the reaction Na(+)(in) + 2 H(+)(out) = Na(+)(out) + 2 H(+)(in). Na(+)/H(+) antiporter that extrudes sodium in exchange for external protons. This Porphyromonas gingivalis (strain ATCC BAA-308 / W83) protein is Na(+)/H(+) antiporter NhaA.